The chain runs to 181 residues: 3-hexulose-6-phosphate isomerase (181 aa).

Residues 27–168 enclose the SIS domain; it reads ILSLVDAAGR…IAKLVDQKGL (142 aa). Substrate-binding positions include serine 45 and 84–89; that span reads SGSGST. Residue glutamate 148 is the Proton acceptor of the active site.

This sequence belongs to the SIS family. PHI subfamily. As to quaternary structure, homodimer.

The catalysed reaction is D-arabino-hex-3-ulose 6-phosphate = beta-D-fructose 6-phosphate. It participates in one-carbon metabolism; formaldehyde assimilation via RuMP pathway; D-fructose 6-phosphate from D-ribulose 5-phosphate and formaldehyde: step 2/2. Its function is as follows. Catalyzes the isomerization between 3-hexulose 6-phosphate and fructose 6-phosphate. This is 3-hexulose-6-phosphate isomerase (rmpB) from Methylomonas aminofaciens.